Here is a 449-residue protein sequence, read N- to C-terminus: Tubulin alpha-8 chain (449 aa).

The short motif at 1-4 is the MREC motif element; that stretch reads MREC. GTP is bound by residues glutamine 11, glutamate 71, serine 140, glycine 144, threonine 145, threonine 179, asparagine 206, and asparagine 228. Glutamate 71 serves as a coordination point for Mg(2+). Glutamate 254 is an active-site residue.

The protein belongs to the tubulin family. In terms of assembly, dimer of alpha and beta chains. A typical microtubule is a hollow water-filled tube with an outer diameter of 25 nm and an inner diameter of 15 nM. Alpha-beta heterodimers associate head-to-tail to form protofilaments running lengthwise along the microtubule wall with the beta-tubulin subunit facing the microtubule plus end conferring a structural polarity. Microtubules usually have 13 protofilaments but different protofilament numbers can be found in some organisms and specialized cells. Mg(2+) is required as a cofactor. Post-translationally, some glutamate residues at the C-terminus are polyglycylated, resulting in polyglycine chains on the gamma-carboxyl group. Glycylation is mainly limited to tubulin incorporated into axonemes (cilia and flagella) whereas glutamylation is prevalent in neuronal cells, centrioles, axonemes, and the mitotic spindle. Both modifications can coexist on the same protein on adjacent residues, and lowering polyglycylation levels increases polyglutamylation, and reciprocally. Cilia and flagella glycylation is required for their stability and maintenance. Flagella glycylation controls sperm motility. In terms of processing, some glutamate residues at the C-terminus are polyglutamylated, resulting in polyglutamate chains on the gamma-carboxyl group. Polyglutamylation plays a key role in microtubule severing by spastin (SPAST). SPAST preferentially recognizes and acts on microtubules decorated with short polyglutamate tails: severing activity by SPAST increases as the number of glutamates per tubulin rises from one to eight, but decreases beyond this glutamylation threshold. Glutamylation is also involved in cilia motility. The C-terminal phenylalanine residue is cleaved by MATCAP1/KIAA0895L. In terms of tissue distribution, expressed at highest levels in the testis, followed by skeletal and heart muscle. Expressed at low levels in the developing brain.

The protein resides in the cytoplasm. The protein localises to the cytoskeleton. It catalyses the reaction GTP + H2O = GDP + phosphate + H(+). Tubulin is the major constituent of microtubules, a cylinder consisting of laterally associated linear protofilaments composed of alpha- and beta-tubulin heterodimers. Microtubules grow by the addition of GTP-tubulin dimers to the microtubule end, where a stabilizing cap forms. Below the cap, tubulin dimers are in GDP-bound state, owing to GTPase activity of alpha-tubulin. The sequence is that of Tubulin alpha-8 chain (Tuba8) from Mus musculus (Mouse).